Consider the following 150-residue polypeptide: 3-dehydroquinate dehydratase (150 aa).

The active-site Proton acceptor is Tyr-26. Substrate-binding residues include Asn-75, His-81, and Asp-88. The active-site Proton donor is the His-101. Substrate-binding positions include 102 to 103 (LS) and Arg-112.

Belongs to the type-II 3-dehydroquinase family. As to quaternary structure, homododecamer.

The enzyme catalyses 3-dehydroquinate = 3-dehydroshikimate + H2O. Its pathway is metabolic intermediate biosynthesis; chorismate biosynthesis; chorismate from D-erythrose 4-phosphate and phosphoenolpyruvate: step 3/7. Its function is as follows. Catalyzes a trans-dehydration via an enolate intermediate. The polypeptide is 3-dehydroquinate dehydratase (Shewanella loihica (strain ATCC BAA-1088 / PV-4)).